We begin with the raw amino-acid sequence, 1151 residues long: Nardilysin (1151 aa).

The N-terminal stretch at 1–20 (MLRRVTVAAVCATRRKLCEA) is a signal peptide. Disordered regions lie at residues 53–108 (RNKA…KSPS) and 133–207 (MEGK…KKTT). Residues S86, S94, and S96 each carry the phosphoserine modification. Acidic residues predominate over residues 141–198 (TDDEEEEEVEEEEEDDDEDSGAEIEDDDEEGFDDEDEFDDEHDDDLDTEDNELEELEE). H233 contributes to the Zn(2+) binding site. The active-site Proton acceptor is the E236. Positions 237 and 314 each coordinate Zn(2+).

This sequence belongs to the peptidase M16 family. As to quaternary structure, interacts with BACE1 and NRG1. It depends on Zn(2+) as a cofactor. Primarily in adult heart, skeletal muscle, and testis and at much lower levels in other tissues.

Its subcellular location is the mitochondrion. It localises to the cell projection. The protein resides in the dendrite. The enzyme catalyses Hydrolysis of polypeptides, preferably at -Xaa-|-Arg-Lys-, and less commonly at -Arg-|-Arg-Xaa-, in which Xaa is not Arg or Lys.. Its function is as follows. Cleaves peptide substrates on the N-terminus of arginine residues in dibasic pairs. Is a critical activator of BACE1- and ADAM17-mediated pro-neuregulin ectodomain shedding, involved in the positive regulation of axonal maturation and myelination. Required for proper functioning of 2-oxoglutarate dehydrogenase (OGDH). The protein is Nardilysin of Homo sapiens (Human).